The following is a 197-amino-acid chain: Probable GTP-binding protein EngB (197 aa).

Positions serine 25–arginine 197 constitute an EngB-type G domain. Residues glycine 33–serine 40, glycine 60–glutamine 64, aspartate 79–glycine 82, threonine 146–aspartate 149, and isoleucine 177–isoleucine 179 contribute to the GTP site. The Mg(2+) site is built by serine 40 and threonine 62.

Belongs to the TRAFAC class TrmE-Era-EngA-EngB-Septin-like GTPase superfamily. EngB GTPase family. Mg(2+) is required as a cofactor.

Functionally, necessary for normal cell division and for the maintenance of normal septation. This Wolbachia pipientis subsp. Culex pipiens (strain wPip) protein is Probable GTP-binding protein EngB.